The primary structure comprises 251 residues: D-aminoacyl-tRNA deacylase (251 aa).

Belongs to the DtdA deacylase family. In terms of assembly, monomer. Zn(2+) is required as a cofactor.

It catalyses the reaction a D-aminoacyl-tRNA + H2O = a tRNA + a D-alpha-amino acid + H(+). The enzyme catalyses glycyl-tRNA(Ala) + H2O = tRNA(Ala) + glycine + H(+). D-aminoacyl-tRNA deacylase with broad substrate specificity. By recycling D-aminoacyl-tRNA to D-amino acids and free tRNA molecules, this enzyme counteracts the toxicity associated with the formation of D-aminoacyl-tRNA entities in vivo. The sequence is that of D-aminoacyl-tRNA deacylase from Pyrobaculum aerophilum (strain ATCC 51768 / DSM 7523 / JCM 9630 / CIP 104966 / NBRC 100827 / IM2).